We begin with the raw amino-acid sequence, 470 residues long: Dihydrolipoyl dehydrogenase (470 aa).

Residues 39 to 47 (EKGNLGGVC), lysine 56, and alanine 119 contribute to the FAD site. A disulfide bridge connects residues cysteine 47 and cysteine 52. Residues 183 to 187 (GGGYI), glutamate 206, and 271 to 274 (TVGR) contribute to the NAD(+) site. Residues aspartate 314 and alanine 322 each contribute to the FAD site. Residue histidine 446 is the Proton acceptor of the active site.

This sequence belongs to the class-I pyridine nucleotide-disulfide oxidoreductase family. As to quaternary structure, homodimer. Identified in a complex with PdhC. FAD is required as a cofactor.

Its subcellular location is the cytoplasm. The enzyme catalyses N(6)-[(R)-dihydrolipoyl]-L-lysyl-[protein] + NAD(+) = N(6)-[(R)-lipoyl]-L-lysyl-[protein] + NADH + H(+). Its function is as follows. Lipoamide dehydrogenase is a component of the alpha-ketoacid dehydrogenase complexes. The sequence is that of Dihydrolipoyl dehydrogenase (pdhD) from Geobacillus stearothermophilus (Bacillus stearothermophilus).